We begin with the raw amino-acid sequence, 301 residues long: 4-hydroxy-tetrahydrodipicolinate synthase (301 aa).

Position 53 (Thr53) interacts with pyruvate. The active-site Proton donor/acceptor is the Tyr142. Lys170 acts as the Schiff-base intermediate with substrate in catalysis. Val212 is a binding site for pyruvate.

The protein belongs to the DapA family. Homotetramer; dimer of dimers.

It is found in the cytoplasm. The catalysed reaction is L-aspartate 4-semialdehyde + pyruvate = (2S,4S)-4-hydroxy-2,3,4,5-tetrahydrodipicolinate + H2O + H(+). The protein operates within amino-acid biosynthesis; L-lysine biosynthesis via DAP pathway; (S)-tetrahydrodipicolinate from L-aspartate: step 3/4. Functionally, catalyzes the condensation of (S)-aspartate-beta-semialdehyde [(S)-ASA] and pyruvate to 4-hydroxy-tetrahydrodipicolinate (HTPA). In Synechocystis sp. (strain ATCC 27184 / PCC 6803 / Kazusa), this protein is 4-hydroxy-tetrahydrodipicolinate synthase.